A 364-amino-acid polypeptide reads, in one-letter code: WAT1-related protein At5g47470 (364 aa).

Helical transmembrane passes span 28–48 (MVIVGGLVMVQFVYAGNSLLM), 59–79 (FTIVIFSTFATFIILSPFAIL), 93–113 (LIGKLVLISFAGVTLFQSLFL), 124–144 (ATAMPNLAPGLIFFIAWIVGL), 158–178 (ILGTLLCVFGALAMSVMHSTS), 197–217 (VVGCIYLLGAVFVLSTNVVLQ), 228–248 (ISLSAITALLGVLITTVVLLL), 255–275 (VLASSLISFGNLVGYSVLAGA), 293–313 (PVFVSMFSPFATVISVAFAVL), and 319–339 (VSLGSVGGMVLMFVGLYLVLW). Residues 40–172 (VYAGNSLLMS…LCVFGALAMS (133 aa)) enclose the EamA 1 domain. An EamA 2 domain is found at 219 to 338 (STLAEFPAPI…LMFVGLYLVL (120 aa)).

The protein belongs to the drug/metabolite transporter (DMT) superfamily. Plant drug/metabolite exporter (P-DME) (TC 2.A.7.4) family.

It localises to the membrane. The protein is WAT1-related protein At5g47470 of Arabidopsis thaliana (Mouse-ear cress).